We begin with the raw amino-acid sequence, 335 residues long: N-acetyl-gamma-glutamyl-phosphate reductase (335 aa).

The active site involves Cys-147.

This sequence belongs to the NAGSA dehydrogenase family. Type 1 subfamily.

The protein resides in the cytoplasm. It catalyses the reaction N-acetyl-L-glutamate 5-semialdehyde + phosphate + NADP(+) = N-acetyl-L-glutamyl 5-phosphate + NADPH + H(+). It functions in the pathway amino-acid biosynthesis; L-arginine biosynthesis; N(2)-acetyl-L-ornithine from L-glutamate: step 3/4. In terms of biological role, catalyzes the NADPH-dependent reduction of N-acetyl-5-glutamyl phosphate to yield N-acetyl-L-glutamate 5-semialdehyde. This is N-acetyl-gamma-glutamyl-phosphate reductase from Sulfurovum sp. (strain NBC37-1).